Reading from the N-terminus, the 406-residue chain is Tyrosine--tRNA ligase (406 aa).

Tyr-35 contacts L-tyrosine. A 'HIGH' region motif is present at residues 40–49 (ATSTSLHIGH). The L-tyrosine site is built by Tyr-166 and Gln-170. The 'KMSKS' region motif lies at 226–230 (KMGKS). Lys-229 is an ATP binding site. Positions 341-405 (ILLIDLMVLS…IGKKRILRVI (65 aa)) constitute an S4 RNA-binding domain.

The protein belongs to the class-I aminoacyl-tRNA synthetase family. TyrS type 1 subfamily. As to quaternary structure, homodimer.

The protein resides in the cytoplasm. The catalysed reaction is tRNA(Tyr) + L-tyrosine + ATP = L-tyrosyl-tRNA(Tyr) + AMP + diphosphate + H(+). Catalyzes the attachment of tyrosine to tRNA(Tyr) in a two-step reaction: tyrosine is first activated by ATP to form Tyr-AMP and then transferred to the acceptor end of tRNA(Tyr). The chain is Tyrosine--tRNA ligase from Borrelia turicatae (strain 91E135).